The sequence spans 304 residues: Large ribosomal subunit protein uL18y (304 aa).

This sequence belongs to the universal ribosomal protein uL18 family. As to quaternary structure, component of the large ribosomal subunit (LSU).

The protein localises to the cytoplasm. The protein resides in the nucleus. Component of the ribosome, a large ribonucleoprotein complex responsible for the synthesis of proteins in the cell. The small ribosomal subunit (SSU) binds messenger RNAs (mRNAs) and translates the encoded message by selecting cognate aminoacyl-transfer RNA (tRNA) molecules. The large subunit (LSU) contains the ribosomal catalytic site termed the peptidyl transferase center (PTC), which catalyzes the formation of peptide bonds, thereby polymerizing the amino acids delivered by tRNAs into a polypeptide chain. The nascent polypeptides leave the ribosome through a tunnel in the LSU and interact with protein factors that function in enzymatic processing, targeting, and the membrane insertion of nascent chains at the exit of the ribosomal tunnel. This Oryza sativa subsp. japonica (Rice) protein is Large ribosomal subunit protein uL18y (RPL5B).